We begin with the raw amino-acid sequence, 127 residues long: Aspartate 1-decarboxylase (127 aa).

The active-site Schiff-base intermediate with substrate; via pyruvic acid is Ser-25. Ser-25 is subject to Pyruvic acid (Ser). Thr-57 provides a ligand contact to substrate. Catalysis depends on Tyr-58, which acts as the Proton donor. 73–75 (GAA) contacts substrate.

This sequence belongs to the PanD family. As to quaternary structure, heterooctamer of four alpha and four beta subunits. It depends on pyruvate as a cofactor. Post-translationally, is synthesized initially as an inactive proenzyme, which is activated by self-cleavage at a specific serine bond to produce a beta-subunit with a hydroxyl group at its C-terminus and an alpha-subunit with a pyruvoyl group at its N-terminus.

Its subcellular location is the cytoplasm. The catalysed reaction is L-aspartate + H(+) = beta-alanine + CO2. It participates in cofactor biosynthesis; (R)-pantothenate biosynthesis; beta-alanine from L-aspartate: step 1/1. In terms of biological role, catalyzes the pyruvoyl-dependent decarboxylation of aspartate to produce beta-alanine. The sequence is that of Aspartate 1-decarboxylase from Anoxybacillus flavithermus (strain DSM 21510 / WK1).